We begin with the raw amino-acid sequence, 139 residues long: Peptide methionine sulfoxide reductase MsrB (139 aa).

One can recognise a MsrB domain in the interval 17–139 (EEQWRRELSP…NSAALKLEPK (123 aa)). Positions 56, 59, 105, and 108 each coordinate Zn(2+). The active-site Nucleophile is the Cys-128.

It belongs to the MsrB Met sulfoxide reductase family. It depends on Zn(2+) as a cofactor.

The catalysed reaction is L-methionyl-[protein] + [thioredoxin]-disulfide + H2O = L-methionyl-(R)-S-oxide-[protein] + [thioredoxin]-dithiol. The chain is Peptide methionine sulfoxide reductase MsrB from Bradyrhizobium diazoefficiens (strain JCM 10833 / BCRC 13528 / IAM 13628 / NBRC 14792 / USDA 110).